The primary structure comprises 617 residues: BPI fold-containing family B member 4 (617 aa).

Residues 1–17 form the signal peptide; that stretch reads MWTAWCVAALSVAAVCG. The disordered stretch occupies residues 124–149; it reads RPSDSAYHRGPGRYRSAADPSSAGRL. N-linked (GlcNAc...) asparagine glycosylation is present at Asn275. Cys297 and Cys334 are oxidised to a cystine.

The protein belongs to the BPI/LBP/Plunc superfamily. BPI/LBP family. In terms of tissue distribution, highly expressed in olfactory mucosa but undetectable in thymus, kidney, lung, brain, spleen and liver.

The protein resides in the secreted. It is found in the cytoplasm. In terms of biological role, may have the capacity to recognize and bind specific classes of odorants. May act as a carrier molecule, transporting odorants across the mucus layer to access receptor sites. May serve as a primary defense mechanism by recognizing and removing potentially harmful odorants or pathogenic microorganisms from the mucosa or clearing excess odorant from mucus to enable new odorant stimuli to be received. The protein is BPI fold-containing family B member 4 (Bpifb4) of Rattus norvegicus (Rat).